We begin with the raw amino-acid sequence, 358 residues long: L-Ala-D/L-Glu epimerase (358 aa).

Positions 24, 135, and 160 each coordinate substrate. Lysine 162 serves as the catalytic Proton acceptor; specific for (R)-substrate epimerization. Residues aspartate 190, glutamate 218, and aspartate 243 each contribute to the Mg(2+) site. Lysine 267 functions as the Proton acceptor; specific for (S)-substrate epimerization in the catalytic mechanism. Substrate-binding residues include cysteine 295, aspartate 320, and aspartate 322.

It belongs to the mandelate racemase/muconate lactonizing enzyme family. Requires Mg(2+) as cofactor.

It carries out the reaction L-alanyl-L-glutamate = L-alanyl-D-glutamate. The protein operates within cell wall degradation; peptidoglycan degradation. In terms of biological role, catalyzes the epimerization of L-Ala-D-Glu to L-Ala-L-Glu and has probably a role in the metabolism of the murein peptide, of which L-Ala-D-Glu is a component. Is also able to catalyze the epimerization of L-Ala-D-Asp. This chain is L-Ala-D/L-Glu epimerase, found in Clostridium acetobutylicum (strain ATCC 824 / DSM 792 / JCM 1419 / IAM 19013 / LMG 5710 / NBRC 13948 / NRRL B-527 / VKM B-1787 / 2291 / W).